A 102-amino-acid polypeptide reads, in one-letter code: Large ribosomal subunit protein bL21 (102 aa).

This sequence belongs to the bacterial ribosomal protein bL21 family. As to quaternary structure, part of the 50S ribosomal subunit. Contacts protein L20.

Functionally, this protein binds to 23S rRNA in the presence of protein L20. The sequence is that of Large ribosomal subunit protein bL21 from Ehrlichia ruminantium (strain Gardel).